We begin with the raw amino-acid sequence, 246 residues long: Octanoyltransferase (246 aa).

Residues 38–213 (AQQSDEFWVL…FLAKRLGLTP (176 aa)) form the BPL/LPL catalytic domain. Substrate-binding positions include 77-84 (RGGQVTYH), 144-146 (SLG), and 157-159 (GLA). The active-site Acyl-thioester intermediate is Cys-175. Residues 225–246 (RQENVTTGGDPGSALTQQPERL) are disordered.

The protein belongs to the LipB family.

The protein localises to the cytoplasm. The catalysed reaction is octanoyl-[ACP] + L-lysyl-[protein] = N(6)-octanoyl-L-lysyl-[protein] + holo-[ACP] + H(+). It functions in the pathway protein modification; protein lipoylation via endogenous pathway; protein N(6)-(lipoyl)lysine from octanoyl-[acyl-carrier-protein]: step 1/2. Catalyzes the transfer of endogenously produced octanoic acid from octanoyl-acyl-carrier-protein onto the lipoyl domains of lipoate-dependent enzymes. Lipoyl-ACP can also act as a substrate although octanoyl-ACP is likely to be the physiological substrate. The polypeptide is Octanoyltransferase (Alcanivorax borkumensis (strain ATCC 700651 / DSM 11573 / NCIMB 13689 / SK2)).